The following is a 208-amino-acid chain: FMN-dependent NADH:quinone oxidoreductase 1 (208 aa).

An FMN-binding site is contributed by 17-19 (SVS).

This sequence belongs to the azoreductase type 1 family. As to quaternary structure, homodimer. FMN serves as cofactor.

The catalysed reaction is 2 a quinone + NADH + H(+) = 2 a 1,4-benzosemiquinone + NAD(+). It carries out the reaction N,N-dimethyl-1,4-phenylenediamine + anthranilate + 2 NAD(+) = 2-(4-dimethylaminophenyl)diazenylbenzoate + 2 NADH + 2 H(+). Functionally, quinone reductase that provides resistance to thiol-specific stress caused by electrophilic quinones. In terms of biological role, also exhibits azoreductase activity. Catalyzes the reductive cleavage of the azo bond in aromatic azo compounds to the corresponding amines. The sequence is that of FMN-dependent NADH:quinone oxidoreductase 1 from Listeria monocytogenes serovar 1/2a (strain ATCC BAA-679 / EGD-e).